The chain runs to 145 residues: Large ribosomal subunit protein uL15 (145 aa).

The tract at residues 1–52 (MRLNTLSPAAGSKRVKHRPGRGIGSGLGKTGGRGVKGQTSRSGGGKVRNGFE) is disordered. Gly residues-rich tracts occupy residues 21-35 (RGIG…GRGV) and 42-52 (SGGGKVRNGFE).

Belongs to the universal ribosomal protein uL15 family. As to quaternary structure, part of the 50S ribosomal subunit.

Its function is as follows. Binds to the 23S rRNA. The protein is Large ribosomal subunit protein uL15 of Aeromonas hydrophila subsp. hydrophila (strain ATCC 7966 / DSM 30187 / BCRC 13018 / CCUG 14551 / JCM 1027 / KCTC 2358 / NCIMB 9240 / NCTC 8049).